A 126-amino-acid chain; its full sequence is Small ribosomal subunit protein uS12 (126 aa).

Residues 1–23 (MPTISQLVRKGRKTVASKSTAPA) are disordered. Aspartate 89 carries the post-translational modification 3-methylthioaspartic acid.

It belongs to the universal ribosomal protein uS12 family. Part of the 30S ribosomal subunit. Contacts proteins S8 and S17. May interact with IF1 in the 30S initiation complex.

Functionally, with S4 and S5 plays an important role in translational accuracy. In terms of biological role, interacts with and stabilizes bases of the 16S rRNA that are involved in tRNA selection in the A site and with the mRNA backbone. Located at the interface of the 30S and 50S subunits, it traverses the body of the 30S subunit contacting proteins on the other side and probably holding the rRNA structure together. The combined cluster of proteins S8, S12 and S17 appears to hold together the shoulder and platform of the 30S subunit. In Clostridium perfringens (strain ATCC 13124 / DSM 756 / JCM 1290 / NCIMB 6125 / NCTC 8237 / Type A), this protein is Small ribosomal subunit protein uS12.